A 178-amino-acid chain; its full sequence is Large ribosomal subunit protein uL5 (178 aa).

It belongs to the universal ribosomal protein uL5 family. As to quaternary structure, part of the 50S ribosomal subunit; part of the 5S rRNA/L5/L18/L25 subcomplex. Contacts the 5S rRNA and the P site tRNA. Forms a bridge to the 30S subunit in the 70S ribosome.

This is one of the proteins that bind and probably mediate the attachment of the 5S RNA into the large ribosomal subunit, where it forms part of the central protuberance. In the 70S ribosome it contacts protein S13 of the 30S subunit (bridge B1b), connecting the 2 subunits; this bridge is implicated in subunit movement. Contacts the P site tRNA; the 5S rRNA and some of its associated proteins might help stabilize positioning of ribosome-bound tRNAs. The polypeptide is Large ribosomal subunit protein uL5 (Prochlorococcus marinus subsp. pastoris (strain CCMP1986 / NIES-2087 / MED4)).